A 118-amino-acid chain; its full sequence is Ribosomal silencing factor RsfS (118 aa).

This sequence belongs to the Iojap/RsfS family. As to quaternary structure, interacts with ribosomal protein uL14 (rplN).

It localises to the cytoplasm. Functionally, functions as a ribosomal silencing factor. Interacts with ribosomal protein uL14 (rplN), blocking formation of intersubunit bridge B8. Prevents association of the 30S and 50S ribosomal subunits and the formation of functional ribosomes, thus repressing translation. This is Ribosomal silencing factor RsfS from Bacillus subtilis (strain 168).